Reading from the N-terminus, the 453-residue chain is Ribulose bisphosphate carboxylase large chain (453 aa).

Positions 1–2 are excised as a propeptide; sequence MS. Pro-3 carries the post-translational modification N-acetylproline. Lys-14 is modified (N6,N6,N6-trimethyllysine). 2 residues coordinate substrate: Asn-123 and Thr-173. Lys-175 serves as the catalytic Proton acceptor. Lys-177 serves as a coordination point for substrate. Lys-201, Asp-203, and Glu-204 together coordinate Mg(2+). Lys-201 carries the post-translational modification N6-carboxylysine. Residue His-294 is the Proton acceptor of the active site. Arg-295, His-327, and Ser-379 together coordinate substrate.

The protein belongs to the RuBisCO large chain family. Type I subfamily. As to quaternary structure, heterohexadecamer of 8 large chains and 8 small chains; disulfide-linked. The disulfide link is formed within the large subunit homodimers. Mg(2+) serves as cofactor. In terms of processing, the disulfide bond which can form in the large chain dimeric partners within the hexadecamer appears to be associated with oxidative stress and protein turnover.

The protein resides in the plastid. It localises to the chloroplast. The enzyme catalyses 2 (2R)-3-phosphoglycerate + 2 H(+) = D-ribulose 1,5-bisphosphate + CO2 + H2O. The catalysed reaction is D-ribulose 1,5-bisphosphate + O2 = 2-phosphoglycolate + (2R)-3-phosphoglycerate + 2 H(+). Its function is as follows. RuBisCO catalyzes two reactions: the carboxylation of D-ribulose 1,5-bisphosphate, the primary event in carbon dioxide fixation, as well as the oxidative fragmentation of the pentose substrate in the photorespiration process. Both reactions occur simultaneously and in competition at the same active site. This Galium corsicum protein is Ribulose bisphosphate carboxylase large chain.